Consider the following 379-residue polypeptide: NADH-quinone oxidoreductase subunit D 1 (379 aa).

Belongs to the complex I 49 kDa subunit family. NDH-1 is composed of 14 different subunits. Subunits NuoB, C, D, E, F, and G constitute the peripheral sector of the complex.

It is found in the cell inner membrane. It catalyses the reaction a quinone + NADH + 5 H(+)(in) = a quinol + NAD(+) + 4 H(+)(out). NDH-1 shuttles electrons from NADH, via FMN and iron-sulfur (Fe-S) centers, to quinones in the respiratory chain. The immediate electron acceptor for the enzyme in this species is believed to be ubiquinone. Couples the redox reaction to proton translocation (for every two electrons transferred, four hydrogen ions are translocated across the cytoplasmic membrane), and thus conserves the redox energy in a proton gradient. This Anaeromyxobacter sp. (strain K) protein is NADH-quinone oxidoreductase subunit D 1.